The following is a 718-amino-acid chain: Protein Smaug homolog 1 (718 aa).

A Phosphoserine modification is found at Ser-168. A disordered region spans residues 278–310 (ARGPQCLPSDHAPLSPQSSVASSGSGGSEHLED). An SAM domain is found at 323–396 (SGMKDVPAWL…LKSLERDIIE (74 aa)). 2 disordered regions span residues 417-474 (AYGS…LQPH) and 572-601 (NRGF…QYQI). The residue at position 420 (Ser-420) is a Phosphoserine. Phosphothreonine is present on Thr-424. The segment covering 453–466 (GATATGATATPSAG) has biased composition (low complexity). Arg-573 bears the Omega-N-methylarginine mark. Phosphoserine is present on Ser-580.

Belongs to the SMAUG family.

Its subcellular location is the cytoplasm. The protein resides in the cell projection. It localises to the dendrite. The protein localises to the synapse. It is found in the synaptosome. Functionally, acts as a translational repressor of SRE-containing messengers. In Macaca fascicularis (Crab-eating macaque), this protein is Protein Smaug homolog 1 (SAMD4A).